A 189-amino-acid chain; its full sequence is Proline-rich protein 29 (189 aa).

The tract at residues 152–189 is disordered; it reads SREREVRAVPPPPPPSATGTVGADVPPASDYYDAESLL.

The polypeptide is Proline-rich protein 29 (PRR29) (Homo sapiens (Human)).